Here is a 221-residue protein sequence, read N- to C-terminus: Potassium voltage-gated channel subfamily E member 4 (221 aa).

At 1-86 the chain is on the extracellular side; it reads MHFLTIYPNC…AGGGSGNGNE (86 aa). N-linked (GlcNAc...) asparagine glycosylation is present at asparagine 9. Positions 58-72 are enriched in polar residues; sequence LNSTHPGTAASSSPL. A disordered region spans residues 58 to 77; it reads LNSTHPGTAASSSPLESRAA. Residues 87–107 traverse the membrane as a helical segment; the sequence is YFYILVVMSFYGIFLIGIMLG. The Cytoplasmic portion of the chain corresponds to 108–221; sequence YMKSKRREKK…GSSENIHQNS (114 aa). A disordered region spans residues 175–221; it reads SVSSESSSPDVHLTIQEEGADDELEETSETPLNESSEGSSENIHQNS. Over residues 192–202 the composition is skewed to acidic residues; that stretch reads EGADDELEETS. Over residues 203 to 221 the composition is skewed to polar residues; it reads ETPLNESSEGSSENIHQNS.

This sequence belongs to the potassium channel KCNE family. As to quaternary structure, forms heterooligomers with KCNA3, inhibiting its activity by impairing localization to the cell membrane. The stoichiometry of KCNA3 and KCNE4 in the heterooligomers are 4:1, 4:2, 4:3 or 4:4 respectively. Increasing the number of KCNE4 subunits steadily slows the activation KCNA3 and decreases its abundance at the cell membrane. However, a single subunit of KCNE4 is sufficient for the cooperative enhancement of the inactivating function of the channel. However, a single subunit of KCNE4 is sufficient for the cooperative enhancement of the inactivating function of the channel. Interacts with KCNQ1; impairs KCNQ1 localization in lipid rafts and inhibits voltage-gated potassium channel activity. As to expression, predominantly expressed in embryo and adult uterus. Low expression found in kidney, small intestine, lung and heart. Detected in kidney, thymus, and uterus (at protein level).

It localises to the membrane. Its function is as follows. Ancillary protein that functions as a regulatory subunit of the voltage-gated potassium (Kv) channel complex composed of pore-forming and potassium-conducting alpha subunits and of regulatory beta subunits. KCNE4 beta subunit modulates the gating kinetics and enhances stability of the channel complex. Associates with KCNQ1/KVLTQ1 alpha subunit to inhibit potassium currents. In terms of biological role, may inhibit KCNQ4-mediated potassium currents. The chain is Potassium voltage-gated channel subfamily E member 4 from Homo sapiens (Human).